Consider the following 428-residue polypeptide: Enolase (428 aa).

Gln-165 is a binding site for (2R)-2-phosphoglycerate. Glu-207 functions as the Proton donor in the catalytic mechanism. 3 residues coordinate Mg(2+): Asp-244, Glu-283, and Asp-310. 4 residues coordinate (2R)-2-phosphoglycerate: Lys-335, Arg-364, Ser-365, and Lys-386. Catalysis depends on Lys-335, which acts as the Proton acceptor.

It belongs to the enolase family. Requires Mg(2+) as cofactor.

It localises to the cytoplasm. It is found in the secreted. The protein resides in the cell surface. The enzyme catalyses (2R)-2-phosphoglycerate = phosphoenolpyruvate + H2O. It participates in carbohydrate degradation; glycolysis; pyruvate from D-glyceraldehyde 3-phosphate: step 4/5. Its function is as follows. Catalyzes the reversible conversion of 2-phosphoglycerate (2-PG) into phosphoenolpyruvate (PEP). It is essential for the degradation of carbohydrates via glycolysis. The protein is Enolase of Chlamydia pneumoniae (Chlamydophila pneumoniae).